Consider the following 289-residue polypeptide: Deoxyuridine 5'-triphosphate nucleotidohydrolase (289 aa).

Substrate is bound by residues 176 to 178 (RSG) and 283 to 284 (FG).

The protein belongs to the dUTPase family. The cofactor is Mg(2+).

It catalyses the reaction dUTP + H2O = dUMP + diphosphate + H(+). In terms of biological role, involved in nucleotide metabolism: produces dUMP, the immediate precursor of thymidine nucleotides and decreases the intracellular concentration of dUTP to avoid uracil incorporation into viral DNA. In Equus caballus (Horse), this protein is Deoxyuridine 5'-triphosphate nucleotidohydrolase.